Here is a 437-residue protein sequence, read N- to C-terminus: D-aminoacyl-tRNA deacylase (437 aa).

It belongs to the DtdA deacylase family. In terms of assembly, monomer. Zn(2+) is required as a cofactor.

It carries out the reaction a D-aminoacyl-tRNA + H2O = a tRNA + a D-alpha-amino acid + H(+). It catalyses the reaction glycyl-tRNA(Ala) + H2O = tRNA(Ala) + glycine + H(+). D-aminoacyl-tRNA deacylase with broad substrate specificity. By recycling D-aminoacyl-tRNA to D-amino acids and free tRNA molecules, this enzyme counteracts the toxicity associated with the formation of D-aminoacyl-tRNA entities in vivo. The polypeptide is D-aminoacyl-tRNA deacylase (Methanoculleus marisnigri (strain ATCC 35101 / DSM 1498 / JR1)).